The sequence spans 290 residues: Protein male abnormal 3 (290 aa).

2 DNA-binding regions (DM) span residues 28–74 (CQRC…SKKK) and 94–142 (CARC…KLRR). Disordered stretches follow at residues 139 to 167 (KLRR…MDME) and 179 to 202 (IIGT…LSMS). The segment covering 146-155 (KSRDGKEPKR) has biased composition (basic and acidic residues). The span at 182 to 202 (TSASPSPSSTTDTMSPSLSMS) shows a compositional bias: low complexity.

In terms of tissue distribution, expression is undetectable in hermaphrodites, but persists in males. In males, expressed in cells of the tail tip.

Its subcellular location is the nucleus. In terms of biological role, transcription factor which binds the DNA motif 5'-[CGA][TCA][TA]ACAATGT[AT][TGA]C-3', probably as a monomer. Acts partially redundantly with the transcription factor dmd-3 to coordinate tail tip cell fusion and retraction and thereby regulate male tail tip morphogenesis. Promotes male-specific development of two tissues, the peripheral nervous system and the intestine. In the peripheral nervous system, directs differentiation of sensory ray neuroblasts into peripheral sense organs. In the intestine, causes repression of vitellogenin gene transcription. This is Protein male abnormal 3 from Caenorhabditis elegans.